The primary structure comprises 100 residues: Putative antiporter subunit mnhF2 (100 aa).

The next 3 helical transmembrane spans lie at 5-25 (FTQI…LVCL), 38-60 (VVSF…VIFN), and 65-87 (LDSI…RFIG).

It belongs to the CPA3 antiporters (TC 2.A.63) subunit F family. In terms of assembly, may form a heterooligomeric complex that consists of seven subunits: mnhA2, mnhB2, mnhC2, mnhD2, mnhE2, mnhF2 and mnhG2.

The protein localises to the cell membrane. This chain is Putative antiporter subunit mnhF2 (mnhF2), found in Staphylococcus epidermidis (strain ATCC 35984 / DSM 28319 / BCRC 17069 / CCUG 31568 / BM 3577 / RP62A).